We begin with the raw amino-acid sequence, 78 residues long: Defensin-like protein 308 (78 aa).

Positions 1–19 (MKTSAFFIAVLLILSCSSS) are cleaved as a signal peptide. Disulfide bonds link C31–C50, C37–C55, and C41–C57.

This sequence belongs to the DEFL family.

It localises to the secreted. The chain is Defensin-like protein 308 from Arabidopsis thaliana (Mouse-ear cress).